A 273-amino-acid chain; its full sequence is Probable glycerophosphodiester phosphodiesterase GpdQ (273 aa).

D8, H10, D50, N80, H154, H194, and H196 together coordinate Fe cation.

The protein belongs to the cyclic nucleotide phosphodiesterase class-III family. Requires Fe(2+) as cofactor.

It carries out the reaction a sn-glycero-3-phosphodiester + H2O = an alcohol + sn-glycerol 3-phosphate + H(+). It catalyses the reaction sn-glycero-3-phosphoethanolamine + H2O = ethanolamine + sn-glycerol 3-phosphate + H(+). Functionally, catalyzes the hydrolysis of the 3'-5' phosphodiester bond of glycerophosphodiesters such as glycerophosphorylethanolamine (GPE), a typical phospholipid metabolite. The protein is Probable glycerophosphodiester phosphodiesterase GpdQ of Arcobacter nitrofigilis (strain ATCC 33309 / DSM 7299 / CCUG 15893 / LMG 7604 / NCTC 12251 / CI) (Campylobacter nitrofigilis).